Reading from the N-terminus, the 77-residue chain is UPF0248 protein Pcal_0252 (77 aa).

Belongs to the UPF0248 family.

In Pyrobaculum calidifontis (strain DSM 21063 / JCM 11548 / VA1), this protein is UPF0248 protein Pcal_0252.